The sequence spans 534 residues: Solute carrier family 22 member 15 (534 aa).

A helical transmembrane segment spans residues 22–42; it reads FLLAVLLQLYSATEAIIITIL. N-linked (GlcNAc...) asparagine glycans are attached at residues N52, N58, and N83. The next 11 membrane-spanning stretches (helical) occupy residues 97–117, 136–156, 161–181, 191–211, 216–236, 297–317, 327–347, 356–376, 391–411, 424–444, and 450–470; these read AAYE…IGVI, LALE…PLFL, LVGV…NECI, SLGS…GYFI, LLAL…LCIP, TLIM…LTLS, LNLA…MYLI, GSLA…MLVP, TLSL…YIYS, MGVC…IPAL, and ALPF…SLLL. An N-linked (GlcNAc...) asparagine glycan is attached at N513.

The protein belongs to the major facilitator (TC 2.A.1) superfamily. Organic cation transporter (TC 2.A.1.19) family.

It is found in the membrane. In terms of biological role, probably transports organic cations. This is Solute carrier family 22 member 15 (slc22a15) from Xenopus tropicalis (Western clawed frog).